Here is a 212-residue protein sequence, read N- to C-terminus: MHKNAPFKYGKFPNAQCYNITPNENNNGYHIGVIFVIVKDNEIVAWADFKGTTYDVNPVPFTYYNIMDLAYDYNWFNHDTLAHIEGVGFDISYSSYSLCPMSRAHGKDASYLSIRKRVNFKRSTEYVGGLFVKDNKITRISYPLSVSQKDVDVDLDLTENNINRIASVYFDIDEKIVVCGYELPPEEKAEAIEVELEISVDDQIFNAFMNRG.

It belongs to the Anti-DarT factor A family.

In terms of biological role, plays a role in counteracting the host DarT defense system, when mutated at Arg-164. In Escherichia phage RB69 (Bacteriophage RB69), this protein is Anti-DarT factor A (adfA).